The primary structure comprises 321 residues: Sideroflexin-1-3 (321 aa).

Helical transmembrane passes span 101-121 (IITGGMMAFYKSTPAVVFWQW), 146-168 (LVTSYCLATSGALVTALSLNHAV), 174-194 (LLGRLVPLVAVGAANCINIPC), 220-240 (AAVVGISTVILSRIAMAIPGM), and 266-286 (IQTLFCGFVLIFATPLGCAFF).

It belongs to the sideroflexin family.

The protein resides in the mitochondrion membrane. Mitochondrial amino-acid transporter that mediates transport of serine into mitochondria. The sequence is that of Sideroflexin-1-3 from Drosophila melanogaster (Fruit fly).